The primary structure comprises 375 residues: 23S rRNA (uracil(747)-C(5))-methyltransferase RlmC (375 aa).

Positions 3, 11, 14, and 87 each coordinate [4Fe-4S] cluster. Q212, F241, E262, and N307 together coordinate S-adenosyl-L-methionine. The active-site Nucleophile is C334.

The protein belongs to the class I-like SAM-binding methyltransferase superfamily. RNA M5U methyltransferase family. RlmC subfamily.

The catalysed reaction is uridine(747) in 23S rRNA + S-adenosyl-L-methionine = 5-methyluridine(747) in 23S rRNA + S-adenosyl-L-homocysteine + H(+). Catalyzes the formation of 5-methyl-uridine at position 747 (m5U747) in 23S rRNA. In Escherichia coli O9:H4 (strain HS), this protein is 23S rRNA (uracil(747)-C(5))-methyltransferase RlmC.